The primary structure comprises 560 residues: SET domain-containing protein 4 (560 aa).

2 disordered regions span residues Met1 to Gln61 and Lys125 to Asn157. Over residues Ser26–Ser38 the composition is skewed to low complexity. Polar residues predominate over residues Leu47 to Ser59. The segment covering Glu141–Asn157 has biased composition (basic and acidic residues). The segment at Lys160–Asp210 adopts a PHD-type zinc-finger fold. Positions Ala346–Gln475 constitute an SET domain.

Belongs to the SET3 family.

Its function is as follows. Putative chromatin regulator. The polypeptide is SET domain-containing protein 4 (SET4) (Saccharomyces cerevisiae (strain ATCC 204508 / S288c) (Baker's yeast)).